The sequence spans 1875 residues: Neuron navigator 1 (1875 aa).

The residue at position 1 (methionine 1) is an N-acetylmethionine. The disordered stretch occupies residues 1 to 63 (MLGSSVKSVQ…GGSGSMAKAS (63 aa)). 2 positions are modified to phosphoserine: serine 93 and serine 145. 2 disordered regions span residues 115 to 230 (SDDM…EERA) and 280 to 339 (SSLR…VGGS). A Phosphothreonine modification is found at threonine 162. Phosphoserine is present on residues serine 197 and serine 202. Residues 258–283 (ESQRKRTVQNVLDLRQNLEETMSSLR) are a coiled coil. The segment covering 280-291 (SSLRGSQVTHSS) has biased composition (polar residues). Residues serine 299, serine 311, serine 315, serine 365, and serine 394 each carry the phosphoserine modification. The segment covering 304 to 318 (PRSVSSLSNRSSPLS) has biased composition (low complexity). Disordered stretches follow at residues 391–463 (GYMS…RTDS) and 477–783 (SESE…AELP). Low complexity-rich tracts occupy residues 414–428 (DESS…DASD) and 436–456 (NASS…RSST). Residues serine 455, serine 477, serine 479, and serine 493 each carry the phosphoserine modification. Basic and acidic residues predominate over residues 479–489 (SEEKTPKKLEY). Residues 506–522 (ERPESCDDASKGGELKK) show a composition bias toward basic and acidic residues. Residue serine 531 is modified to Phosphoserine. Threonine 537 carries the phosphothreonine modification. Serine 544 carries the post-translational modification Phosphoserine. Threonine 547 carries the phosphothreonine modification. A compositionally biased stretch (basic and acidic residues) spans 558-569 (GKPEGKATDKGK). Threonine 575 is modified (phosphothreonine). The segment covering 584–594 (AGRDRLSDAKK) has biased composition (basic and acidic residues). Polar residues-rich tracts occupy residues 618–638 (GTAT…QKSS) and 648–658 (RKTSLDVSNSV). A Phosphoserine modification is found at serine 651. Omega-N-methylarginine is present on arginine 690. 2 stretches are compositionally biased toward polar residues: residues 696–712 (VSSS…QGGL) and 726–735 (GRSTPAPVNQ). Positions 733 to 758 (VNQTDREKEKAKAKAVALDSDNISLK) form a coiled coil. Phosphoserine occurs at positions 752, 756, 762, 799, and 810. A compositionally biased stretch (polar residues) spans 753–772 (DNISLKSIGSPESTPKNQAS). 2 disordered regions span residues 800–840 (LANL…PLPS) and 893–982 (MSLP…SPPA). Low complexity-rich tracts occupy residues 807–818 (NSNSLDLPSSSD) and 893–902 (MSLPSAFPSS). Serine 998 is subject to Phosphoserine. Residue threonine 1004 is modified to Phosphothreonine. Positions 1070–1161 (SSAEERMQSE…SEAQAVIQGA (92 aa)) form a coiled coil. At threonine 1168 the chain carries Phosphothreonine. Disordered stretches follow at residues 1172–1202 (LRIK…KDAD), 1242–1306 (ATPD…KEVS), 1359–1381 (VAPG…LSSP), and 1808–1841 (KLYH…SLDS). Position 1179 is a phosphoserine (serine 1179). A compositionally biased stretch (low complexity) spans 1179–1198 (SSDSISSLNSITSHSSIGSS). Over residues 1244-1259 (PDSSAPSSPKLQHGST) the composition is skewed to polar residues. The span at 1260-1281 (ETASPSIKSSTSSSVGTEVTET) shows a compositional bias: low complexity. Serine 1263 carries the phosphoserine modification. The stretch at 1301–1360 (EKKEVSELRSELWEKEMKLTDIRLEALNSAHQLDQLRETMHNMQLEVDLLKAENDRLKVA) forms a coiled coil. The span at 1365-1381 (SGCTPGQVPGSSALSSP) shows a compositional bias: polar residues. Serine 1380 is subject to Phosphoserine.

Belongs to the Nav/unc-53 family. Interacts with tubulin. In terms of tissue distribution, expressed in heart and brain. Present in brain (at protein level). In adult brain, found almost exclusively in areas of secondary neurogenesis from the hippocampus and the subventricular zone.

It is found in the cytoplasm. The protein localises to the cytoskeleton. In terms of biological role, may be involved in neuronal migration. The protein is Neuron navigator 1 (Nav1) of Mus musculus (Mouse).